The primary structure comprises 271 residues: 3-methyl-2-oxobutanoate hydroxymethyltransferase (271 aa).

2 residues coordinate Mg(2+): aspartate 51 and aspartate 90. 3-methyl-2-oxobutanoate-binding positions include 51–52, aspartate 90, and lysine 118; that span reads DS. Glutamate 120 is a Mg(2+) binding site. The active-site Proton acceptor is glutamate 186.

It belongs to the PanB family. In terms of assembly, homodecamer; pentamer of dimers. The cofactor is Mg(2+).

Its subcellular location is the cytoplasm. The catalysed reaction is 3-methyl-2-oxobutanoate + (6R)-5,10-methylene-5,6,7,8-tetrahydrofolate + H2O = 2-dehydropantoate + (6S)-5,6,7,8-tetrahydrofolate. The protein operates within cofactor biosynthesis; (R)-pantothenate biosynthesis; (R)-pantoate from 3-methyl-2-oxobutanoate: step 1/2. In terms of biological role, catalyzes the reversible reaction in which hydroxymethyl group from 5,10-methylenetetrahydrofolate is transferred onto alpha-ketoisovalerate to form ketopantoate. The polypeptide is 3-methyl-2-oxobutanoate hydroxymethyltransferase (Xanthomonas oryzae pv. oryzae (strain MAFF 311018)).